The following is a 329-amino-acid chain: Ferredoxin--NADP reductase (329 aa).

Residues Asp-28, Gln-36, Tyr-41, Ala-81, Phe-115, Asp-282, and Thr-323 each contribute to the FAD site.

This sequence belongs to the ferredoxin--NADP reductase type 2 family. As to quaternary structure, homodimer. FAD serves as cofactor.

The catalysed reaction is 2 reduced [2Fe-2S]-[ferredoxin] + NADP(+) + H(+) = 2 oxidized [2Fe-2S]-[ferredoxin] + NADPH. In Anaplasma marginale (strain St. Maries), this protein is Ferredoxin--NADP reductase.